The following is a 233-amino-acid chain: MTSKIIVALDYEKEEEALCLVDQIDPSLCRLKVGKEMFTTLGTKFVKALHDRNFDVFLDLKFHDIPNTVARAVRSAADLGVWMVDLHASGGLRMMEEAKKILEPYGKDAPLLISVTVLTSMEDLDLLQIGINASPMEQVIRLANLTQRAGLDGVVCSPQEVEILRANCGKDFKLITPGIRPIGSDFGDQRRVMTPAGAIQAGSDYLVIGRPITQADNPAEVLKSINASLPVNR.

Substrate-binding positions include Asp10, Lys32, 59–68, Thr119, Arg180, Gln189, Gly209, and Arg210; that span reads DLKFHDIPNT. Lys61 acts as the Proton donor in catalysis.

The protein belongs to the OMP decarboxylase family. Type 1 subfamily. As to quaternary structure, homodimer.

The catalysed reaction is orotidine 5'-phosphate + H(+) = UMP + CO2. It participates in pyrimidine metabolism; UMP biosynthesis via de novo pathway; UMP from orotate: step 2/2. Catalyzes the decarboxylation of orotidine 5'-monophosphate (OMP) to uridine 5'-monophosphate (UMP). The protein is Orotidine 5'-phosphate decarboxylase of Pasteurella multocida (strain Pm70).